The sequence spans 70 residues: Small ribosomal subunit protein bS21 (70 aa).

Belongs to the bacterial ribosomal protein bS21 family.

This is Small ribosomal subunit protein bS21 from Chromobacterium violaceum (strain ATCC 12472 / DSM 30191 / JCM 1249 / CCUG 213 / NBRC 12614 / NCIMB 9131 / NCTC 9757 / MK).